The sequence spans 245 residues: Dehydrogenase/reductase SDR family member 6 (245 aa).

NAD(+)-binding positions include 16-18 (QGI), aspartate 37, and aspartate 58. Substrate is bound at residue arginine 144. Residue tyrosine 147 is the Proton acceptor of the active site. Residues lysine 151 and 180–184 (VDTPS) each bind NAD(+). Substrate is bound by residues arginine 188 and arginine 205.

The protein belongs to the short-chain dehydrogenases/reductases (SDR) family. Homotetramer.

The protein resides in the cytoplasm. The catalysed reaction is cis-4-hydroxy-L-proline + NAD(+) = 4-oxo-L-proline + NADH + H(+). It catalyses the reaction (R)-3-hydroxybutanoate + NAD(+) = acetoacetate + NADH + H(+). It participates in amino-acid metabolism. The protein operates within siderophore biosynthesis. NAD(H)-dependent dehydrogenase/reductase with a preference for cyclic substrates. Catalyzes stereoselective conversion of 4-oxo-L-proline to cis-4-hydroxy-L-proline, likely a detoxification mechanism for ketoprolines. Mediates the formation of 2,5-dihydroxybenzoate (2,5-DHBA), a siderophore that chelates free cytoplasmic iron, thereby regulating iron transport and homeostasis while protecting cells against free radical-induced oxidative stress. The iron-siderophore complex is imported into mitochondria, providing an iron source for mitochondrial metabolic processes in particular heme synthesis. May act as a 3-hydroxybutyrate dehydrogenase. The chain is Dehydrogenase/reductase SDR family member 6 (bdh2) from Danio rerio (Zebrafish).